Consider the following 171-residue polypeptide: Allophycocyanin subunit beta-18 (171 aa).

Asn72 is modified (N4-methylasparagine). Cys82 provides a ligand contact to (2R,3E)-phycocyanobilin.

The protein belongs to the phycobiliprotein family. In terms of assembly, heterodimer of an alpha and a beta chain. Post-translationally, contains one covalently linked bilin chromophore.

The protein localises to the plastid. The protein resides in the chloroplast thylakoid membrane. Its function is as follows. Light-harvesting photosynthetic bile pigment-protein from the phycobiliprotein complex. Allophycocyanin has a maximum absorption at approximately 650 nanometers. The chain is Allophycocyanin subunit beta-18 (apcF) from Aglaothamnion neglectum (Red alga).